We begin with the raw amino-acid sequence, 168 residues long: ATP synthase subunit b (168 aa).

Residues 9 to 29 form a helical membrane-spanning segment; it reads AIPFGTIAYTLFIFLILLVML.

Belongs to the ATPase B chain family. In terms of assembly, F-type ATPases have 2 components, F(1) - the catalytic core - and F(0) - the membrane proton channel. F(1) has five subunits: alpha(3), beta(3), gamma(1), delta(1), epsilon(1). F(0) has three main subunits: a(1), b(2) and c(10-14). The alpha and beta chains form an alternating ring which encloses part of the gamma chain. F(1) is attached to F(0) by a central stalk formed by the gamma and epsilon chains, while a peripheral stalk is formed by the delta and b chains.

The protein localises to the cell membrane. Functionally, f(1)F(0) ATP synthase produces ATP from ADP in the presence of a proton or sodium gradient. F-type ATPases consist of two structural domains, F(1) containing the extramembraneous catalytic core and F(0) containing the membrane proton channel, linked together by a central stalk and a peripheral stalk. During catalysis, ATP synthesis in the catalytic domain of F(1) is coupled via a rotary mechanism of the central stalk subunits to proton translocation. Its function is as follows. Component of the F(0) channel, it forms part of the peripheral stalk, linking F(1) to F(0). The protein is ATP synthase subunit b of Bacillus cereus (strain G9842).